Here is a 348-residue protein sequence, read N- to C-terminus: Methylthioribose-1-phosphate isomerase (348 aa).

Substrate-binding positions include 53–55 (RGA), Arg93, and Gln197. Asp238 (proton donor) is an active-site residue. 248–249 (NK) is a substrate binding site.

It belongs to the eIF-2B alpha/beta/delta subunits family. MtnA subfamily.

It carries out the reaction 5-(methylsulfanyl)-alpha-D-ribose 1-phosphate = 5-(methylsulfanyl)-D-ribulose 1-phosphate. Its pathway is amino-acid biosynthesis; L-methionine biosynthesis via salvage pathway; L-methionine from S-methyl-5-thio-alpha-D-ribose 1-phosphate: step 1/6. Functionally, catalyzes the interconversion of methylthioribose-1-phosphate (MTR-1-P) into methylthioribulose-1-phosphate (MTRu-1-P). The protein is Methylthioribose-1-phosphate isomerase of Gloeobacter violaceus (strain ATCC 29082 / PCC 7421).